The following is a 331-amino-acid chain: Adenosine deaminase (331 aa).

Zn(2+) contacts are provided by His12 and His14. The substrate site is built by His14, Asp16, and Gly170. His197 serves as a coordination point for Zn(2+). Residue Glu200 is the Proton donor of the active site. Asp278 lines the Zn(2+) pocket. Asp279 contributes to the substrate binding site.

This sequence belongs to the metallo-dependent hydrolases superfamily. Adenosine and AMP deaminases family. Adenosine deaminase subfamily. Requires Zn(2+) as cofactor.

It carries out the reaction adenosine + H2O + H(+) = inosine + NH4(+). It catalyses the reaction 2'-deoxyadenosine + H2O + H(+) = 2'-deoxyinosine + NH4(+). In terms of biological role, catalyzes the hydrolytic deamination of adenosine and 2-deoxyadenosine. This chain is Adenosine deaminase, found in Shewanella baltica (strain OS155 / ATCC BAA-1091).